The primary structure comprises 133 residues: Small ribosomal subunit protein bS16 (133 aa).

Basic and acidic residues predominate over residues 83–101 (KRDARSNPKKAEPGKKAQE). The interval 83–102 (KRDARSNPKKAEPGKKAQER) is disordered.

This sequence belongs to the bacterial ribosomal protein bS16 family.

The chain is Small ribosomal subunit protein bS16 from Mesorhizobium japonicum (strain LMG 29417 / CECT 9101 / MAFF 303099) (Mesorhizobium loti (strain MAFF 303099)).